The sequence spans 435 residues: Cyclin-dependent kinase 15 (435 aa).

The Protein kinase domain occupies 103-387 (YLNLEKLGEG…AQEALVHDYF (285 aa)). ATP-binding positions include 109–117 (LGEGSYATV) and Lys132. Asp224 acts as the Proton acceptor in catalysis.

The protein belongs to the protein kinase superfamily. CMGC Ser/Thr protein kinase family. CDC2/CDKX subfamily. Mg(2+) is required as a cofactor.

It carries out the reaction L-seryl-[protein] + ATP = O-phospho-L-seryl-[protein] + ADP + H(+). The enzyme catalyses L-threonyl-[protein] + ATP = O-phospho-L-threonyl-[protein] + ADP + H(+). In terms of biological role, serine/threonine-protein kinase that acts like an antiapoptotic protein that counters TRAIL/TNFSF10-induced apoptosis by inducing phosphorylation of BIRC5 at 'Thr-34'. The chain is Cyclin-dependent kinase 15 (CDK15) from Homo sapiens (Human).